The sequence spans 495 residues: 1-aminocyclopropane-1-carboxylate synthase 6 (495 aa).

Positions 58 and 96 each coordinate substrate. Residue lysine 280 is modified to N6-(pyridoxal phosphate)lysine. A phosphoserine mark is found at serine 480, serine 483, and serine 488.

Belongs to the class-I pyridoxal-phosphate-dependent aminotransferase family. Homodimer and heterodimer. In vivo, the relevance of heterodimerization with other ACS enzymes is however unsure. Interacts with GRF3. Pyridoxal 5'-phosphate is required as a cofactor. Post-translationally, phosphorylated on serine residue by MAP kinase (MPK6). May be processed at its C-terminus. Expressed in roots and flowers.

It carries out the reaction S-adenosyl-L-methionine = 1-aminocyclopropane-1-carboxylate + S-methyl-5'-thioadenosine + H(+). The protein operates within alkene biosynthesis; ethylene biosynthesis via S-adenosyl-L-methionine; ethylene from S-adenosyl-L-methionine: step 1/2. Functionally, 1-aminocyclopropane-1-carboxylate synthase (ACS) enzymes catalyze the conversion of S-adenosyl-L-methionine (SAM) into 1-aminocyclopropane-1-carboxylate (ACC), a direct precursor of ethylene. Involved in bacterial flagellin-induced ethylene production. This is 1-aminocyclopropane-1-carboxylate synthase 6 (ACS6) from Arabidopsis thaliana (Mouse-ear cress).